We begin with the raw amino-acid sequence, 286 residues long: MAARVLRARGAAWAGGLLQRAAPCSLLPRLRTWTSSSNRSREDSWLKSLFVRKVDPRKDAHSNLLAKKETSNLYKLQFHNVKPECLEAYNKICQEVLPKIHEDKHYPCTLVGTWNTWYGEQDQAVHLWRYEGGYPALTEVMNKLRENKEFLEFRKARSDMLLSRKNQLLLEFSFWNEPVPRSGPNIYELRSYQLRPGTMIEWGNYWARAIRFRQDGNEAVGGFFSQIGQLYMVHHLWAYRDLQTREDIRNAAWHKHGWEELVYYTVPLIQEMESRIMIPLKTSPLQ.

The N-terminal 23 residues, 1 to 23 (MAARVLRARGAAWAGGLLQRAAP), are a transit peptide targeting the mitochondrion.

The protein belongs to the NipSnap family. Interacts with CALCOCO2/NDP52, NBR1, SQSTM1/p62, TAX1BP1 and WDFY3/ALFY. Interacts with ATG8 family proteins (MAP1LC3A, MAP1LC3B, MAP1LC3C, GABARAP, GABARAPL1 and GABARAPL2). Interacts with VDAC1. As to expression, widely expressed. Most abundant in heart and skeletal muscle.

It is found in the mitochondrion matrix. Functionally, protein involved in mitophagy by facilitating recruitment of the autophagy machinery required for clearance of damaged mitochondria. Accumulates on the mitochondria surface in response to mitochondrial depolarization and acts as a 'eat me' signal by recruiting proteins involved in selective autophagy, such as autophagy receptors (CALCOCO2/NDP52, NBR1, SQSTM1/p62, TAX1BP1 and WDFY3/ALFY) and ATG8 family proteins (MAP1LC3A, MAP1LC3B, MAP1LC3C, GABARAP, GABARAPL1 and GABARAPL2). This chain is Protein NipSnap homolog 2, found in Homo sapiens (Human).